Consider the following 840-residue polypeptide: Probable sulfate permease C869.05c (840 aa).

12 helical membrane-spanning segments follow: residues 120-140 (WLIN…PQGM), 148-168 (LPSE…CFFA), 173-193 (VSIG…ANVM), 208-228 (LALL…GFII), 230-250 (FIPV…ILSG), 278-298 (LPDT…LFFT), 315-335 (AFFL…TAIS), 410-430 (LIAM…PATG), 447-467 (IAGI…TDAF), 470-490 (IPNA…ILPM), 505-525 (CIFF…GIYV), and 527-547 (VCLA…SFLG). The 156-residue stretch at 578–733 (NLEIQSPPPG…CVEVAAPLRD (156 aa)) folds into the STAS domain. Ser-823 bears the Phosphoserine mark.

This sequence belongs to the SLC26A/SulP transporter (TC 2.A.53) family.

Its subcellular location is the membrane. In terms of biological role, high affinity uptake of sulfate into the cell. The sequence is that of Probable sulfate permease C869.05c from Schizosaccharomyces pombe (strain 972 / ATCC 24843) (Fission yeast).